The following is a 369-amino-acid chain: Anhydro-N-acetylmuramic acid kinase (369 aa).

12-19 (GTSLDGVD) contributes to the ATP binding site.

Belongs to the anhydro-N-acetylmuramic acid kinase family.

It carries out the reaction 1,6-anhydro-N-acetyl-beta-muramate + ATP + H2O = N-acetyl-D-muramate 6-phosphate + ADP + H(+). It participates in amino-sugar metabolism; 1,6-anhydro-N-acetylmuramate degradation. The protein operates within cell wall biogenesis; peptidoglycan recycling. Its function is as follows. Catalyzes the specific phosphorylation of 1,6-anhydro-N-acetylmuramic acid (anhMurNAc) with the simultaneous cleavage of the 1,6-anhydro ring, generating MurNAc-6-P. Is required for the utilization of anhMurNAc either imported from the medium or derived from its own cell wall murein, and thus plays a role in cell wall recycling. This chain is Anhydro-N-acetylmuramic acid kinase, found in Escherichia coli O157:H7.